The primary structure comprises 73 residues: Putative antitoxin VapB38 (73 aa).

Its function is as follows. Probable antitoxin component of a type II toxin-antitoxin (TA) system. Its putative cognate toxin is VapC38. The sequence is that of Putative antitoxin VapB38 (vapB38) from Mycobacterium tuberculosis (strain ATCC 25618 / H37Rv).